Reading from the N-terminus, the 471-residue chain is UDP-N-acetylmuramate--L-alanine ligase (471 aa).

114 to 120 (GTHGKTT) serves as a coordination point for ATP.

The protein belongs to the MurCDEF family.

The protein resides in the cytoplasm. The enzyme catalyses UDP-N-acetyl-alpha-D-muramate + L-alanine + ATP = UDP-N-acetyl-alpha-D-muramoyl-L-alanine + ADP + phosphate + H(+). Its pathway is cell wall biogenesis; peptidoglycan biosynthesis. Its function is as follows. Cell wall formation. This Agrobacterium fabrum (strain C58 / ATCC 33970) (Agrobacterium tumefaciens (strain C58)) protein is UDP-N-acetylmuramate--L-alanine ligase.